Consider the following 192-residue polypeptide: Probable thymidylate kinase (192 aa).

8–15 (GIDGSGKS) is a binding site for ATP.

Belongs to the thymidylate kinase family.

It carries out the reaction dTMP + ATP = dTDP + ADP. The sequence is that of Probable thymidylate kinase from Pyrobaculum aerophilum (strain ATCC 51768 / DSM 7523 / JCM 9630 / CIP 104966 / NBRC 100827 / IM2).